The following is a 134-amino-acid chain: Acyl carrier protein, chloroplastic (134 aa).

A chloroplast-targeting transit peptide spans Met1–Cys51. In terms of domain architecture, Carrier spans Pro55–Val130. Ser90 is subject to O-(pantetheine 4'-phosphoryl)serine.

The protein belongs to the acyl carrier protein (ACP) family. 4'-phosphopantetheine is transferred from CoA to a specific serine of apo-ACP by acpS. This modification is essential for activity because fatty acids are bound in thioester linkage to the sulfhydryl of the prosthetic group. In terms of tissue distribution, seed.

The protein resides in the plastid. The protein localises to the chloroplast. It functions in the pathway lipid metabolism; fatty acid biosynthesis. Carrier of the growing fatty acid chain in fatty acid biosynthesis. The sequence is that of Acyl carrier protein, chloroplastic (ACL1.A3) from Brassica napus (Rape).